The primary structure comprises 400 residues: E3 ubiquitin-protein ligase RNF149 (400 aa).

Residues 1–32 (MAWRRREASVGARGVLALALLALALCVPGARG) form the signal peptide. Residues Asn-52 and Asn-145 are each glycosylated (N-linked (GlcNAc...) asparagine). The PA domain maps to 67–175 (SSPKEGAHGL…PKGREILELV (109 aa)). The helical transmembrane segment at 201–221 (VVFVAIAFITMMIISLAWLIF) threads the bilayer. The RING-type; atypical zinc-finger motif lies at 269–310 (CAVCIENFKVKDIIRILPCKHIFHRICIDPWLLDHRTCPMCK). The disordered stretch occupies residues 325 to 400 (DVQEMPAPES…SDSRHGGPIS (76 aa)). Ser-345 is modified (phosphoserine). A compositionally biased stretch (low complexity) spans 356–368 (DSSPPSASPAESE). The span at 389–400 (GRSDSRHGGPIS) shows a compositional bias: basic and acidic residues.

The protein resides in the membrane. It carries out the reaction S-ubiquitinyl-[E2 ubiquitin-conjugating enzyme]-L-cysteine + [acceptor protein]-L-lysine = [E2 ubiquitin-conjugating enzyme]-L-cysteine + N(6)-ubiquitinyl-[acceptor protein]-L-lysine.. Its pathway is protein modification; protein ubiquitination. Functionally, E3 ubiquitin-protein ligase. Ubiquitinates BRAF, inducing its proteasomal degradation. The polypeptide is E3 ubiquitin-protein ligase RNF149 (RNF149) (Homo sapiens (Human)).